The primary structure comprises 224 residues: UPF0758 protein lin1584 (224 aa).

One can recognise an MPN domain in the interval Val-102–Phe-224. Residues His-173, His-175, and Asp-186 each coordinate Zn(2+). The JAMM motif motif lies at His-173–Asp-186.

Belongs to the UPF0758 family.

This Listeria innocua serovar 6a (strain ATCC BAA-680 / CLIP 11262) protein is UPF0758 protein lin1584.